Reading from the N-terminus, the 129-residue chain is MRHRKSGRHLSRTSAHRKAMFQNMAVSLFEHELIKTTLPKAKELRRVAEPLITLAKEDSVANRRLAFDRTRSKAAVGKLFNDLGKRYANRPGGYLRILKCGFRAGDNAPMAYVELVDRPVGGEVVEAAE.

Belongs to the bacterial ribosomal protein bL17 family. In terms of assembly, part of the 50S ribosomal subunit. Contacts protein L32.

The protein is Large ribosomal subunit protein bL17 of Pseudomonas aeruginosa (strain UCBPP-PA14).